A 300-amino-acid polypeptide reads, in one-letter code: Cytochrome b (300 aa).

6 consecutive transmembrane segments (helical) span residues 28 to 48 (YGFL…LLAL), 72 to 94 (WCFR…LHIL), 107 to 127 (SWIS…YGYV), 168 to 187 (FFVF…FGIL), 223 to 243 (IPNK…LFLL), and 279 to 299 (IGCQ…YIIL). The heme b site is built by H78 and H92.

The protein belongs to the cytochrome b family. In terms of assembly, the main subunits of complex b-c1 are: cytochrome b, cytochrome c1 and the Rieske protein. The cofactor is heme b.

The protein localises to the mitochondrion inner membrane. Functionally, component of the ubiquinol-cytochrome c reductase complex (complex III or cytochrome b-c1 complex) that is part of the mitochondrial respiratory chain. The b-c1 complex mediates electron transfer from ubiquinol to cytochrome c. Contributes to the generation of a proton gradient across the mitochondrial membrane that is then used for ATP synthesis. This Plasmodium gallinaceum protein is Cytochrome b (MT-CYB).